We begin with the raw amino-acid sequence, 311 residues long: Methionyl-tRNA formyltransferase (311 aa).

112 to 115 (SLLP) serves as a coordination point for (6S)-5,6,7,8-tetrahydrofolate.

It belongs to the Fmt family.

It catalyses the reaction L-methionyl-tRNA(fMet) + (6R)-10-formyltetrahydrofolate = N-formyl-L-methionyl-tRNA(fMet) + (6S)-5,6,7,8-tetrahydrofolate + H(+). Its function is as follows. Attaches a formyl group to the free amino group of methionyl-tRNA(fMet). The formyl group appears to play a dual role in the initiator identity of N-formylmethionyl-tRNA by promoting its recognition by IF2 and preventing the misappropriation of this tRNA by the elongation apparatus. This Bradyrhizobium diazoefficiens (strain JCM 10833 / BCRC 13528 / IAM 13628 / NBRC 14792 / USDA 110) protein is Methionyl-tRNA formyltransferase.